We begin with the raw amino-acid sequence, 120 residues long: MASPKETLQRRAARVRRQVKAVANGRPRLSVHRSSKNIYAQIIDDVRGVTLAAASTLDGDLKGKLKTGADSAAAAAVGKLVAERAVKAGVKDVVFDRSAFIYHGRVKALAEAAREGGLSF.

It belongs to the universal ribosomal protein uL18 family. In terms of assembly, part of the 50S ribosomal subunit; part of the 5S rRNA/L5/L18/L25 subcomplex. Contacts the 5S and 23S rRNAs.

Its function is as follows. This is one of the proteins that bind and probably mediate the attachment of the 5S RNA into the large ribosomal subunit, where it forms part of the central protuberance. This is Large ribosomal subunit protein uL18 from Brucella suis biovar 1 (strain 1330).